The sequence spans 206 residues: Orotate phosphoribosyltransferase (206 aa).

5-phospho-alpha-D-ribose 1-diphosphate contacts are provided by residues R93, K97, H99, and E119–T127. An orotate-binding site is contributed by S123.

This sequence belongs to the purine/pyrimidine phosphoribosyltransferase family. PyrE subfamily. Homodimer. Mg(2+) is required as a cofactor.

The catalysed reaction is orotidine 5'-phosphate + diphosphate = orotate + 5-phospho-alpha-D-ribose 1-diphosphate. Its pathway is pyrimidine metabolism; UMP biosynthesis via de novo pathway; UMP from orotate: step 1/2. Catalyzes the transfer of a ribosyl phosphate group from 5-phosphoribose 1-diphosphate to orotate, leading to the formation of orotidine monophosphate (OMP). The sequence is that of Orotate phosphoribosyltransferase from Bacillus caldolyticus.